The following is a 36-amino-acid chain: Pancreatic polypeptide (36 aa).

Phenylalanine 36 is subject to Phenylalanine amide.

It belongs to the NPY family.

The protein resides in the secreted. In terms of biological role, hormone secreted by pancreatic cells that acts as a regulator of pancreatic and gastrointestinal functions. The chain is Pancreatic polypeptide (ppy) from Aquarana catesbeiana (American bullfrog).